Reading from the N-terminus, the 248-residue chain is DNA repair protein RecO (248 aa).

It belongs to the RecO family.

Functionally, involved in DNA repair and RecF pathway recombination. This is DNA repair protein RecO from Bacillus cereus (strain B4264).